Consider the following 841-residue polypeptide: Protein translocase subunit SecA (841 aa).

ATP contacts are provided by residues Gln86, 104 to 108, and Asp493; that span reads GEGKT. Residues 788–822 are disordered; sequence EEVAEGKAVRPSANGQEDKKAKRKPVRKAENIGRN. Positions 825, 827, 836, and 837 each coordinate Zn(2+).

Belongs to the SecA family. Monomer and homodimer. Part of the essential Sec protein translocation apparatus which comprises SecA, SecYEG and auxiliary proteins SecDF. Other proteins may also be involved. Zn(2+) serves as cofactor.

Its subcellular location is the cell membrane. The protein resides in the cytoplasm. It catalyses the reaction ATP + H2O + cellular proteinSide 1 = ADP + phosphate + cellular proteinSide 2.. Part of the Sec protein translocase complex. Interacts with the SecYEG preprotein conducting channel. Has a central role in coupling the hydrolysis of ATP to the transfer of proteins into and across the cell membrane, serving as an ATP-driven molecular motor driving the stepwise translocation of polypeptide chains across the membrane. The sequence is that of Protein translocase subunit SecA from Shouchella clausii (strain KSM-K16) (Alkalihalobacillus clausii).